We begin with the raw amino-acid sequence, 179 residues long: Large ribosomal subunit protein uL5 (179 aa).

This sequence belongs to the universal ribosomal protein uL5 family. Part of the 50S ribosomal subunit; part of the 5S rRNA/L5/L18/L25 subcomplex. Contacts the 5S rRNA and the P site tRNA. Forms a bridge to the 30S subunit in the 70S ribosome.

Functionally, this is one of the proteins that bind and probably mediate the attachment of the 5S RNA into the large ribosomal subunit, where it forms part of the central protuberance. In the 70S ribosome it contacts protein S13 of the 30S subunit (bridge B1b), connecting the 2 subunits; this bridge is implicated in subunit movement. Contacts the P site tRNA; the 5S rRNA and some of its associated proteins might help stabilize positioning of ribosome-bound tRNAs. In Nitrosomonas eutropha (strain DSM 101675 / C91 / Nm57), this protein is Large ribosomal subunit protein uL5.